The primary structure comprises 185 residues: Putative manganese efflux pump MntP (185 aa).

6 consecutive transmembrane segments (helical) span residues 4–24, 40–60, 64–84, 108–128, 134–154, and 165–185; these read LFIG…TDAF, IFHI…AGMA, LLSG…LFIL, LLLF…SLGM, FLAV…GLLA, and YSEA…LLPV.

The protein belongs to the MntP (TC 9.B.29) family.

The protein resides in the cell membrane. In terms of biological role, probably functions as a manganese efflux pump. This Bacillus velezensis (strain DSM 23117 / BGSC 10A6 / LMG 26770 / FZB42) (Bacillus amyloliquefaciens subsp. plantarum) protein is Putative manganese efflux pump MntP.